Reading from the N-terminus, the 365-residue chain is uncharacterized protein (365 aa).

2 disordered regions span residues glutamine 218–alanine 262 and proline 315–cysteine 342. Basic and acidic residues-rich tracts occupy residues proline 239 to glutamate 257 and methionine 331 to proline 341.

This is an uncharacterized protein from Mus musculus (Mouse).